The chain runs to 115 residues: MSANNERLRRARKVRMKIRELGTDRLCVHRTPRHMYAQVTTADGSKVLATASTLDKELRQGATGNVDAAKKVGQLIAERAKAAGIEKVAFDRSGYRYHGRVQALADAAREAGLQF.

It belongs to the universal ribosomal protein uL18 family. Part of the 50S ribosomal subunit; part of the 5S rRNA/L5/L18/L25 subcomplex. Contacts the 5S and 23S rRNAs.

Functionally, this is one of the proteins that bind and probably mediate the attachment of the 5S RNA into the large ribosomal subunit, where it forms part of the central protuberance. This Marinobacter nauticus (strain ATCC 700491 / DSM 11845 / VT8) (Marinobacter aquaeolei) protein is Large ribosomal subunit protein uL18.